A 129-amino-acid chain; its full sequence is Small ribosomal subunit protein eS6 (129 aa).

The tract at residues 106–129 (QINASIVSRGEQSIDDLLGGEDDE) is disordered.

Belongs to the eukaryotic ribosomal protein eS6 family.

The protein is Small ribosomal subunit protein eS6 of Natronomonas pharaonis (strain ATCC 35678 / DSM 2160 / CIP 103997 / JCM 8858 / NBRC 14720 / NCIMB 2260 / Gabara) (Halobacterium pharaonis).